A 277-amino-acid chain; its full sequence is UPF0496 protein At3g48650 (277 aa).

2 helical membrane-spanning segments follow: residues 124–144 and 145–165; these read YIFFAAALLSVLALWIYLGAV and SLVVAAKVVIEVATPSIAPLW.

Belongs to the UPF0496 family.

It localises to the membrane. In Arabidopsis thaliana (Mouse-ear cress), this protein is UPF0496 protein At3g48650.